A 151-amino-acid polypeptide reads, in one-letter code: MNKTYLPSQGAIERNWYVVDAADQRLGRLATEIARVLRGKHKPTYTPHMDTGDFVIVINADKVTVTGRKASQKLYRRHSGRPGGMKVETFAHLQQRLPERIIEQAVKGMLPKNALGRQLFTKLKVYRGAEHPHQAQQPEVLSIQTFAGDDN.

This sequence belongs to the universal ribosomal protein uL13 family. Part of the 50S ribosomal subunit.

Functionally, this protein is one of the early assembly proteins of the 50S ribosomal subunit, although it is not seen to bind rRNA by itself. It is important during the early stages of 50S assembly. The polypeptide is Large ribosomal subunit protein uL13 (Synechococcus elongatus (strain ATCC 33912 / PCC 7942 / FACHB-805) (Anacystis nidulans R2)).